We begin with the raw amino-acid sequence, 89 residues long: MKQYIFFLALIVLVSTFAEAGKKTEILDKVKKVFSKAKDKILAGVEDLNNMSELGCPFIDKWCEDHCESKKLVGKCENFDCSCVKLGGK.

The signal sequence occupies residues 1-20 (MKQYIFFLALIVLVSTFAEA). Residues 21 to 39 (GKKTEILDKVKKVFSKAKD) constitute a propeptide that is removed on maturation. The 37-residue stretch at 53 to 89 (ELGCPFIDKWCEDHCESKKLVGKCENFDCSCVKLGGK) folds into the BetaSPN-type CS-alpha/beta domain. Cystine bridges form between Cys56–Cys76, Cys63–Cys81, and Cys67–Cys83.

The protein belongs to the long chain scorpion toxin family. Class 2 subfamily. In terms of tissue distribution, expressed by the venom gland.

The protein resides in the secreted. Inhibits voltage-gated potassium channel. This chain is Neurotoxin beta-KTx 12, found in Lychas mucronatus (Chinese swimming scorpion).